The following is a 147-amino-acid chain: Hemoglobin subunit beta (147 aa).

One can recognise a Globin domain in the interval 2–147 (EWTDAERSAI…VVSALCRQYH (146 aa)). Residues His-63 and His-92 each contribute to the heme b site.

This sequence belongs to the globin family. In terms of assembly, heterotetramer of two alpha chains and two beta chains. As to expression, red blood cells.

Involved in oxygen transport from gills to the various peripheral tissues. This chain is Hemoglobin subunit beta (hbb), found in Carassius auratus (Goldfish).